The following is a 305-amino-acid chain: UDP-N-acetylenolpyruvoylglucosamine reductase 2 (305 aa).

One can recognise an FAD-binding PCMH-type domain in the interval 33-197 (VGGKADVFVA…LEARFELEEG (165 aa)). The active site involves Arg176. Residue Ser226 is the Proton donor of the active site. The active site involves Glu296.

This sequence belongs to the MurB family. Requires FAD as cofactor.

Its subcellular location is the cytoplasm. It carries out the reaction UDP-N-acetyl-alpha-D-muramate + NADP(+) = UDP-N-acetyl-3-O-(1-carboxyvinyl)-alpha-D-glucosamine + NADPH + H(+). It participates in cell wall biogenesis; peptidoglycan biosynthesis. In terms of biological role, cell wall formation. In Bacillus cereus (strain ZK / E33L), this protein is UDP-N-acetylenolpyruvoylglucosamine reductase 2.